We begin with the raw amino-acid sequence, 49 residues long: Large ribosomal subunit protein bL33B (49 aa).

This sequence belongs to the bacterial ribosomal protein bL33 family.

The chain is Large ribosomal subunit protein bL33B from Lacticaseibacillus paracasei (strain ATCC 334 / BCRC 17002 / CCUG 31169 / CIP 107868 / KCTC 3260 / NRRL B-441) (Lactobacillus paracasei).